The chain runs to 678 residues: Probable N-methylproline demethylase (678 aa).

FMN-binding positions include glycine 59, glutamine 102, arginine 220, lysine 299, and 321-322 (TR). [4Fe-4S] cluster contacts are provided by cysteine 345, cysteine 351, and cysteine 363. FAD is bound by residues alanine 396, glutamate 415, glutamine 423, arginine 433, and alanine 460.

This sequence in the N-terminal section; belongs to the NADH:flavin oxidoreductase/NADH oxidase family. Requires FMN as cofactor. FAD is required as a cofactor. The cofactor is [4Fe-4S] cluster.

It carries out the reaction N-methyl-L-proline + NAD(+) + H2O = L-proline + formaldehyde + NADH + H(+). Its pathway is amine and polyamine degradation; stachydrine degradation. Possible NADH-dependent oxidase, may function as a demethylase that converts N-methylproline to proline. This Rhizobium meliloti (strain 1021) (Ensifer meliloti) protein is Probable N-methylproline demethylase.